Reading from the N-terminus, the 462-residue chain is Cysteine--tRNA ligase (462 aa).

Position 28 (cysteine 28) interacts with Zn(2+). The 'HIGH' region signature appears at 30–40; it reads VTAYDLCHIGH. Zn(2+) contacts are provided by cysteine 209, histidine 234, and glutamate 238. A 'KMSKS' region motif is present at residues 266–270; sequence KMSKS. Lysine 269 is a binding site for ATP.

The protein belongs to the class-I aminoacyl-tRNA synthetase family. In terms of assembly, monomer. Zn(2+) serves as cofactor.

The protein localises to the cytoplasm. It catalyses the reaction tRNA(Cys) + L-cysteine + ATP = L-cysteinyl-tRNA(Cys) + AMP + diphosphate. This is Cysteine--tRNA ligase from Baumannia cicadellinicola subsp. Homalodisca coagulata.